A 658-amino-acid chain; its full sequence is MGKFILDSQFAPAGDQPQAIQKITQFIHNGAQYSTLVGVTGSGKTYTMANIIANLNIPTLIMTHNKTLAAQLYSEFRGFFPKNHVEYFISHFDYYQPEAYIPRRDLFIEKDSSINEDLERLRLSATTSLLAYDDIIVIASVSANYGLGNPAEYLTMIHKFEIGQEEAQKTLLLKLVDMGYTRNDTIFERGNFRVNGEVIDIFPAYNEKEFIRIEFFGDEIERIGVFDALERTALTQLESFVLYAANQFIVGAQRLQSAIKNIEVELENRLEEFVSQDKQIEYQRLKTRTEFDLEMIKESGICKGIENYARHLTGKKAGETPYSLLDYFEQKGKPYLLIVDESHVSLPQFGGMYAGDRSRKEVLVEYGFRLPSALDNRPLRFDEFINKAPHFLFVSATPAQKELELSQEHIAEQIIRPTGLLDPLYEVRDADNAVLDLYDEIKARIAKNQRVLITTLTKKMAEELSKYYAELGIKVRYMHSDIDAIERNHLIRALRLGEFDVLIGINLLREGLDLPEVSLIAIMDADKEGFLRSETSLIQTMGRAARNVEGKVILYAKKITGSMQRAFEVTDYRRTKQEEFNRIHNITPKSVQRNVEQELKIESSGLSRLYEKASKKIPKSERESIIKELNIKMHQAAKALEFEEAARLRDEIARIRTM.

Residues 25–416 (QFIHNGAQYS…QEHIAEQIIR (392 aa)) form the Helicase ATP-binding domain. 38–45 (GVTGSGKT) is an ATP binding site. The Beta-hairpin signature appears at 91–114 (HFDYYQPEAYIPRRDLFIEKDSSI). A Helicase C-terminal domain is found at 433–607 (AVLDLYDEIK…ELKIESSGLS (175 aa)). In terms of domain architecture, UVR spans 623–658 (ESIIKELNIKMHQAAKALEFEEAARLRDEIARIRTM).

Belongs to the UvrB family. As to quaternary structure, forms a heterotetramer with UvrA during the search for lesions. Interacts with UvrC in an incision complex.

It localises to the cytoplasm. In terms of biological role, the UvrABC repair system catalyzes the recognition and processing of DNA lesions. A damage recognition complex composed of 2 UvrA and 2 UvrB subunits scans DNA for abnormalities. Upon binding of the UvrA(2)B(2) complex to a putative damaged site, the DNA wraps around one UvrB monomer. DNA wrap is dependent on ATP binding by UvrB and probably causes local melting of the DNA helix, facilitating insertion of UvrB beta-hairpin between the DNA strands. Then UvrB probes one DNA strand for the presence of a lesion. If a lesion is found the UvrA subunits dissociate and the UvrB-DNA preincision complex is formed. This complex is subsequently bound by UvrC and the second UvrB is released. If no lesion is found, the DNA wraps around the other UvrB subunit that will check the other stand for damage. This Helicobacter hepaticus (strain ATCC 51449 / 3B1) protein is UvrABC system protein B.